The chain runs to 258 residues: Chymotrypsin-like elastase family member 1 (258 aa).

Residues 1–8 form the signal peptide; sequence MLVLYGHS. Positions 9 to 18 are cleaved as a propeptide — activation peptide; the sequence is TQDLPETNAR. One can recognise a Peptidase S1 domain in the interval 19-256; sequence VVGGTEAGRN…YISWINNVIA (238 aa). C48 and C64 form a disulfide bridge. The Charge relay system role is filled by H63. The Ca(2+) site is built by D77, N79, Q82, and E87. The N-linked (GlcNAc...) asparagine glycan is linked to N79. D111 (charge relay system) is an active-site residue. 3 disulfide bridges follow: C145–C212, C176–C192, and C202–C232. S206 serves as the catalytic Charge relay system. The N-linked (GlcNAc...) asparagine glycan is linked to N233.

This sequence belongs to the peptidase S1 family. Elastase subfamily. It depends on Ca(2+) as a cofactor. In terms of tissue distribution, basal layers of epidermis (at protein level). Not expressed in the pancreas.

It is found in the secreted. It carries out the reaction Hydrolysis of proteins, including elastin. Preferential cleavage: Ala-|-Xaa.. Functionally, serine proteases that hydrolyze many proteins in addition to elastin. The protein is Chymotrypsin-like elastase family member 1 (CELA1) of Homo sapiens (Human).